A 429-amino-acid chain; its full sequence is Ribosomal RNA small subunit methyltransferase B (429 aa).

S-adenosyl-L-methionine-binding positions include 254-260 (CAAPGGK), D277, D303, and D322. C375 (nucleophile) is an active-site residue. A disordered region spans residues 397–419 (ALSETGTPDQPGQQNLPGGEEGD). Residues 400–412 (ETGTPDQPGQQNL) show a composition bias toward polar residues.

Belongs to the class I-like SAM-binding methyltransferase superfamily. RsmB/NOP family.

The protein resides in the cytoplasm. It carries out the reaction cytidine(967) in 16S rRNA + S-adenosyl-L-methionine = 5-methylcytidine(967) in 16S rRNA + S-adenosyl-L-homocysteine + H(+). Specifically methylates the cytosine at position 967 (m5C967) of 16S rRNA. The polypeptide is Ribosomal RNA small subunit methyltransferase B (Salmonella agona (strain SL483)).